We begin with the raw amino-acid sequence, 153 residues long: Large ribosomal subunit protein uL22 (153 aa).

It belongs to the universal ribosomal protein uL22 family. In terms of assembly, part of the 50S ribosomal subunit.

This protein binds specifically to 23S rRNA. It makes multiple contacts with different domains of the 23S rRNA in the assembled 50S subunit and ribosome. Functionally, the globular domain of the protein is located near the polypeptide exit tunnel on the outside of the subunit, while an extended beta-hairpin is found that lines the wall of the exit tunnel in the center of the 70S ribosome. This is Large ribosomal subunit protein uL22 from Methanococcus vannielii (strain ATCC 35089 / DSM 1224 / JCM 13029 / OCM 148 / SB).